The sequence spans 625 residues: Phosphomethylpyrimidine synthase (625 aa).

Residues N231, M260, Y289, H325, 345-347 (SRG), 386-389 (DGLR), and E425 each bind substrate. H429 is a binding site for Zn(2+). Y452 is a substrate binding site. A Zn(2+)-binding site is contributed by H493. Positions 573, 576, and 581 each coordinate [4Fe-4S] cluster.

Belongs to the ThiC family. Homodimer. [4Fe-4S] cluster is required as a cofactor.

It carries out the reaction 5-amino-1-(5-phospho-beta-D-ribosyl)imidazole + S-adenosyl-L-methionine = 4-amino-2-methyl-5-(phosphooxymethyl)pyrimidine + CO + 5'-deoxyadenosine + formate + L-methionine + 3 H(+). It functions in the pathway cofactor biosynthesis; thiamine diphosphate biosynthesis. In terms of biological role, catalyzes the synthesis of the hydroxymethylpyrimidine phosphate (HMP-P) moiety of thiamine from aminoimidazole ribotide (AIR) in a radical S-adenosyl-L-methionine (SAM)-dependent reaction. The protein is Phosphomethylpyrimidine synthase of Acinetobacter baumannii (strain AB0057).